We begin with the raw amino-acid sequence, 780 residues long: Vezatin (780 aa).

Transmembrane regions (helical) follow at residues 140–160 and 162–182; these read ATPN…LIMF and TCWI…YLII. Residues 430 to 467 adopt a coiled-coil conformation; the sequence is VRSLQLHLKALLNEVIILEDELEKLVCTKETQELLSEA. 2 disordered regions span residues 620-718 and 757-780; these read DPVE…PRDT and QEQT…VEEK. Residues 624–643 show a composition bias toward polar residues; it reads SVSNSEPPMNSDTEKVNSNA. Composition is skewed to basic and acidic residues over residues 647–663 and 690–699; these read ETSK…RTEY and TMCHQHESEA. Residues 702 to 711 show a composition bias toward low complexity; sequence PQAAAAGATA. Residues 761–780 show a composition bias toward acidic residues; it reads FGDEEEEQLVEGGENEVEEK.

Belongs to the vezatin family. Interacts with USH2A (via the cytoplasmic region); the interaction associates VEZT with the USH2 complex at the stereocilia base. Interacts with myosin MYO7A and the cadherin-catenins complex. In terms of tissue distribution, expressed in developing cochlear hair cells. Isoform 1, isoform 2 and isoform 3 are expressed in testis. In the seminiferous epithelium, present exclusively in the acrosome of spermatids (at protein level).

The protein localises to the cell membrane. Its subcellular location is the cell projection. The protein resides in the stereocilium membrane. It localises to the cell junction. It is found in the adherens junction. The protein localises to the nucleus. Its subcellular location is the cytoplasmic vesicle. The protein resides in the secretory vesicle. It localises to the acrosome. In terms of biological role, plays a pivotal role in the establishment of adherens junctions and their maintenance in adult life. Required for morphogenesis of the preimplantation embryo, and for the implantation process. This is Vezatin from Mus musculus (Mouse).